Reading from the N-terminus, the 114-residue chain is Eukaryotic translation initiation factor 6 (114 aa).

It belongs to the eIF-6 family. Monomer. Associates with the 60S ribosomal subunit.

It is found in the cytoplasm. The protein localises to the nucleus. It localises to the nucleolus. Binds to the 60S ribosomal subunit and prevents its association with the 40S ribosomal subunit to form the 80S initiation complex in the cytoplasm. May also be involved in ribosome biogenesis. This Trypanosoma cruzi protein is Eukaryotic translation initiation factor 6.